The primary structure comprises 166 residues: Phosphopantetheine adenylyltransferase (166 aa).

Ser9 contacts substrate. Residues 9-10 (SF) and His17 each bind ATP. Substrate-binding residues include Lys41, Thr74, and Arg88. ATP is bound by residues 89 to 91 (GLR), Glu99, and 124 to 130 (DSFISSS).

The protein belongs to the bacterial CoaD family. In terms of assembly, homohexamer. The cofactor is Mg(2+).

It is found in the cytoplasm. It carries out the reaction (R)-4'-phosphopantetheine + ATP + H(+) = 3'-dephospho-CoA + diphosphate. The protein operates within cofactor biosynthesis; coenzyme A biosynthesis; CoA from (R)-pantothenate: step 4/5. Functionally, reversibly transfers an adenylyl group from ATP to 4'-phosphopantetheine, yielding dephospho-CoA (dPCoA) and pyrophosphate. This chain is Phosphopantetheine adenylyltransferase, found in Lactobacillus johnsonii (strain CNCM I-12250 / La1 / NCC 533).